Consider the following 219-residue polypeptide: Cytidylate kinase (219 aa).

Position 15-23 (15-23) interacts with ATP; the sequence is GPAASGKGT.

The protein belongs to the cytidylate kinase family. Type 1 subfamily.

The protein resides in the cytoplasm. It carries out the reaction CMP + ATP = CDP + ADP. The enzyme catalyses dCMP + ATP = dCDP + ADP. This is Cytidylate kinase from Brucella abortus (strain S19).